Consider the following 71-residue polypeptide: MRIHYVLFAFLLVLLSPFAAFSQDINSKRACYREGGECLQRCIGLFHKIGTCNFRFKCCKFQIPEKKTKIL.

A signal peptide spans 1-22 (MRIHYVLFAFLLVLLSPFAAFS). Glutamine 23 carries the pyrrolidone carboxylic acid modification. The propeptide occupies 23–25 (QDI). Disulfide bonds link cysteine 31-cysteine 58, cysteine 38-cysteine 52, and cysteine 42-cysteine 59.

Belongs to the beta-defensin family. LAP/TAP subfamily.

The protein localises to the secreted. In terms of biological role, has bactericidal activity. This Mus musculus (Mouse) protein is Beta-defensin 7 (Defb7).